Consider the following 489-residue polypeptide: Rhamnulokinase (489 aa).

Residue 13–17 (ASSGR) participates in ATP binding. A disulfide bridge connects residues Cys68 and Cys222. Substrate-binding positions include Gly83 and 236–238 (HDT). Residue Asp237 is the Proton acceptor of the active site. ATP is bound at residue Thr259. Residue Asn296 participates in substrate binding. Residue Gln304 coordinates ATP. Cys353 and Cys370 are disulfide-bonded. Gly402 serves as a coordination point for ATP. Cysteines 413 and 417 form a disulfide.

It belongs to the rhamnulokinase family. Mg(2+) serves as cofactor.

It catalyses the reaction L-rhamnulose + ATP = L-rhamnulose 1-phosphate + ADP + H(+). It participates in carbohydrate degradation; L-rhamnose degradation; glycerone phosphate from L-rhamnose: step 2/3. Involved in the catabolism of L-rhamnose (6-deoxy-L-mannose). Catalyzes the transfer of the gamma-phosphate group from ATP to the 1-hydroxyl group of L-rhamnulose to yield L-rhamnulose 1-phosphate. This is Rhamnulokinase from Salmonella enteritidis PT4 (strain P125109).